Consider the following 296-residue polypeptide: Antisense-enhancing sequence 1 (296 aa).

Glu47 is an active-site residue.

Belongs to the PhzF family.

Functionally, may have isomerase activity. Enhances target gene silencing when coexpressed with antisense RNA. The sequence is that of Antisense-enhancing sequence 1 (aes1) from Schizosaccharomyces pombe (strain 972 / ATCC 24843) (Fission yeast).